A 718-amino-acid polypeptide reads, in one-letter code: Polyribonucleotide nucleotidyltransferase (718 aa).

The Mg(2+) site is built by aspartate 487 and aspartate 493. The KH domain maps to 554–613 (PRIETFKIPTDKIREVIGTGGKVIREIVEKTGAKVNIEDDGTVKVASSDGESIKAAIKWI). The S1 motif domain occupies 623–691 (GEIYEGTVVK…DRGKTRLSMK (69 aa)). Positions 692–718 (VVDQETGEDLEAKQKAEGDAPREAAGE) are disordered. Positions 701–718 (LEAKQKAEGDAPREAAGE) are enriched in basic and acidic residues.

The protein belongs to the polyribonucleotide nucleotidyltransferase family. It depends on Mg(2+) as a cofactor.

The protein localises to the cytoplasm. The enzyme catalyses RNA(n+1) + phosphate = RNA(n) + a ribonucleoside 5'-diphosphate. Its function is as follows. Involved in mRNA degradation. Catalyzes the phosphorolysis of single-stranded polyribonucleotides processively in the 3'- to 5'-direction. In Nitrobacter winogradskyi (strain ATCC 25391 / DSM 10237 / CIP 104748 / NCIMB 11846 / Nb-255), this protein is Polyribonucleotide nucleotidyltransferase.